Reading from the N-terminus, the 296-residue chain is Glutamate 5-kinase (296 aa).

K15 contacts ATP. Residues S55, D159, and N186 each coordinate substrate. Residues S206–D207 and T248–K254 contribute to the ATP site.

The protein belongs to the glutamate 5-kinase family.

The protein resides in the cytoplasm. It catalyses the reaction L-glutamate + ATP = L-glutamyl 5-phosphate + ADP. It functions in the pathway amino-acid biosynthesis; L-proline biosynthesis; L-glutamate 5-semialdehyde from L-glutamate: step 1/2. Its function is as follows. Catalyzes the transfer of a phosphate group to glutamate to form L-glutamate 5-phosphate. This Treponema pallidum (strain Nichols) protein is Glutamate 5-kinase.